The sequence spans 59 residues: Embryonic testis differentiation protein homolog C (59 aa).

The disordered stretch occupies residues 1–22; sequence MDKELPKASPSEPALNIKKSGK.

This chain is Embryonic testis differentiation protein homolog C, found in Homo sapiens (Human).